The sequence spans 597 residues: Glypican-3 (597 aa).

The N-terminal stretch at 1-24 is a signal peptide; sequence MAGTVRTACLLVAMLLGLGCLGQA. Position 25 is a pyrrolidone carboxylic acid (Q25). 7 cysteine pairs are disulfide-bonded: C34–C71, C64–C261, C72–C264, C196–C348, C251–C284, C273–C421, and C277–C409. 2 N-linked (GlcNAc...) asparagine glycosylation sites follow: N123 and N240. The residue at position 351 (S351) is a Phosphoserine. An N-linked (GlcNAc...) asparagine glycan is attached at N417. O-linked (Xyl...) (glycosaminoglycan) serine glycosylation is found at S494 and S508. Positions 533–553 are disordered; the sequence is DAPGNKQHGNQKDNEITTSHS.

It belongs to the glypican family. As to quaternary structure, heterodimer; disulfide-linked. Cleavage by a furin-like convertase results in production of alpha and beta chains which form a disulfide-linked heterodimer. Interacts with DPP4. Interacts with FGF2. Interacts with WNT5A. Also interacts with WNT3A and WNT7B. Interacts with hedgehog protein SHH; the heparan sulfate chains are not required for the interaction. Also interacts with hedgehog protein IHH. Interacts with CD81. Interacts with Wnt receptors FZD4, FZD7 and FZD8; the heparan sulfate chains are required for the interaction. In terms of processing, O-glycosylated; contains heparan sulfate and/or chondroitin sulfate. Cleaved intracellularly by a furin-like convertase to generate 2 subunits, alpha and beta, which remain associated through disulfide bonds and are associated with the cell surface via the GPI-anchor. This processing is essential for its role in inhibition of hedgehog signaling. A second proteolytic event may result in cleavage of the protein on the cell surface, separating it from the GPI-anchor and leading to its shedding from the cell surface.

The protein localises to the cell membrane. Functionally, cell surface proteoglycan. Negatively regulates the hedgehog signaling pathway when attached via the GPI-anchor to the cell surface by competing with the hedgehog receptor PTC1 for binding to hedgehog proteins. Binding to the hedgehog protein SHH triggers internalization of the complex by endocytosis and its subsequent lysosomal degradation. Positively regulates the canonical Wnt signaling pathway by binding to the Wnt receptor Frizzled and stimulating the binding of the Frizzled receptor to Wnt ligands. Positively regulates the non-canonical Wnt signaling pathway. Binds to CD81 which decreases the availability of free CD81 for binding to the transcriptional repressor HHEX, resulting in nuclear translocation of HHEX and transcriptional repression. Inhibits the dipeptidyl peptidase activity of DPP4. Plays a role in limb patterning and skeletal development by controlling the cellular response to BMP4. Modulates the effects of growth factors BMP2, BMP7 and FGF7 on renal branching morphogenesis. Required for coronary vascular development. Plays a role in regulating cell movements during gastrulation. The polypeptide is Glypican-3 (Gpc3) (Rattus norvegicus (Rat)).